The chain runs to 310 residues: Uracil phosphoribosyltransferase homolog (310 aa).

Disordered stretches follow at residues 1 to 27 (MASE…PSPE) and 62 to 89 (SERD…GNYD). A compositionally biased stretch (polar residues) spans 16 to 25 (RQVNSTSSPS). Residue Ser-25 is modified to Phosphoserine. GTP is bound by residues Arg-134, Arg-143, and 177-180 (EKGN). Arg-187 contacts 5-phospho-alpha-D-ribose 1-diphosphate. GTP is bound by residues Arg-204 and Arg-233. A 5-phospho-alpha-D-ribose 1-diphosphate-binding site is contributed by 239-247 (YPILSTGNT). 300 to 302 (THF) lines the uracil pocket.

The protein belongs to the UPRTase family.

The protein localises to the cytoplasm. It localises to the nucleus. The polypeptide is Uracil phosphoribosyltransferase homolog (Uprt) (Mus musculus (Mouse)).